We begin with the raw amino-acid sequence, 283 residues long: MKVKVIPVLEDNYMYLIIEEHTREAVAIDVAVAERLLEIAGREGVSLTMVLSTHHHWDHTRGNAELAHILPGLAVLGADERICALTRRLEHGEGLQFGAIHVRCLLTPGHTSGHMSYFLWEDDCPDSPALFSGDALSVAGCGWHLEDTAQQMYQSLAKTLGTLPPETKVFCGHEHTLSNLEFAQKVEPCNEHVQAKLSWAQERDDEDIPTVPSTLGEELMYNPFLRVTEDAVRAFTGQVAPAQVLEALCRERARFQPAVEPPQPQVRALLALQWGLLSTHQKK.

Zn(2+) contacts are provided by H54, H56, D58, H59, H110, D134, and H173.

It belongs to the metallo-beta-lactamase superfamily. Glyoxalase II family. Zn(2+) serves as cofactor.

In terms of biological role, hydrolase acting on ester bonds. The chain is Hydroxyacylglutathione hydrolase-like protein (Haghl) from Mus musculus (Mouse).